The primary structure comprises 468 residues: 6-phosphogluconate dehydrogenase, decarboxylating (468 aa).

NADP(+) contacts are provided by residues 10–15 (GMAVMG), 33–35 (NRS), 74–76 (VKA), and Asn-102. Substrate contacts are provided by residues Asn-102 and 128-130 (SGG). The Proton acceptor role is filled by Lys-183. Position 186–187 (186–187 (HN)) interacts with substrate. Glu-190 acts as the Proton donor in catalysis. Residues Tyr-191, Lys-260, Arg-287, Arg-445, and His-451 each contribute to the substrate site.

This sequence belongs to the 6-phosphogluconate dehydrogenase family. In terms of assembly, homodimer.

It catalyses the reaction 6-phospho-D-gluconate + NADP(+) = D-ribulose 5-phosphate + CO2 + NADPH. Its pathway is carbohydrate degradation; pentose phosphate pathway; D-ribulose 5-phosphate from D-glucose 6-phosphate (oxidative stage): step 3/3. Functionally, catalyzes the oxidative decarboxylation of 6-phosphogluconate to ribulose 5-phosphate and CO(2), with concomitant reduction of NADP to NADPH. The chain is 6-phosphogluconate dehydrogenase, decarboxylating (gnd) from Escherichia coli (strain K12).